The following is a 910-amino-acid chain: MDYSRCCGSTNSRVIYMNIDEKWQNAWERDHVFEPKIDERKKFMITVPWPYTNGSLHVGHGRTYTLGDIIARYKRSRNYNVLFPMGFHQSGTPILAFSERIRAGDASTIALYRSYLSEYGEKDIDGWLEKFKDPRNIADYFSNAIINDFKHLGYSIDWTRKFTSADEFYQNVVKWQFHKLNEKGLIKQDKYPILYSIDDDNAVGEDDIKDGDTDKVSVEEYTAVFFESNSYSLIAASLRPETLFGVTNIWINPTGEYVKIKIGDKIAVVSKEAVDKLKYQRNDVSVIGPISAESIQRKKFTTPFGKEVPVYKADFVDTDNGTGVVYSVPSHSVYDFVYYRRKKSGQTPVVIEAPLKMPEVEIKFDLNSKEGLDEATKELYKSEFYYGKLVNSGEYTGLTVRDAREKIKKDLIGSGKAIIFYETSRKAVTRGGSKVIVAVLPDQWFIDYSADWLKKLSHDMLNRMMIYPEMYRNVMNDAIDWLKERPCARRRGLGTKLPFDDRWVIESLSDSTIYPAVYTTSIQMRKLYENGKLDENAIERIFDGGEVQNDEERTARNEFSYWYPVDIRLTAVPHISNHLSFYVMNHAAIFPPEKWPSGLIISGLVVSNGAKISKSKGNVVSLLEITKKYSADIYRLYVAVQADVSSTMDWNENDLSNIVRRFNEFKTIMDSFKPDTSELNFEETWFVSRFAERLKQFMDQMDGFQIRDAYINIFYGTLNDLKYAVNRGASQNRSLASIIADWLRALMPVISHHAEEYWHRYVSNTYVSINPFDDNFAEKYERLAKVYGLSTSEFYQVMDYVEHIIQDINNIISVTGIEPKSVEITVANEDVIKASREFLSNSVSERSKRYLQYLAKRRKDIVVYPFNEIDILRRNSSYISRQVKADVSINTGDIINGKIAVPGKPVIHIT.

Positions 50–60 (PYTNGSLHVGH) match the 'HIGH' region motif. The 'KMSKS' region motif lies at 611 to 615 (KISKS). Residue lysine 614 participates in ATP binding.

This sequence belongs to the class-I aminoacyl-tRNA synthetase family.

The protein resides in the cytoplasm. The enzyme catalyses tRNA(Leu) + L-leucine + ATP = L-leucyl-tRNA(Leu) + AMP + diphosphate. The protein is Leucine--tRNA ligase of Thermoplasma volcanium (strain ATCC 51530 / DSM 4299 / JCM 9571 / NBRC 15438 / GSS1).